The following is a 493-amino-acid chain: Transcript termination protein A18 (493 aa).

Residues 100-256 enclose the Helicase ATP-binding domain; that stretch reads MIELKRPLYI…NSIINIAKLS (157 aa). ATP is bound at residue 113 to 120; sequence LACGFGKT. The short motif at 206-209 is the DESH box element; it reads DESH. The Helicase C-terminal domain maps to 309-456; it reads ILDTLVEEFK…IISLSVDKLG (148 aa).

The protein belongs to the helicase family. Poxviruses subfamily. Interacts with G2. Might be part of a transcription complex composed at least of G2, A18, and H5.

It is found in the virion. Functionally, DNA helicase which seems to act as a postreplicative transcription termination factor. Involved in ATP-dependent release of nascent RNA. Forms a stable complex with single-stranded DNA, and to a lesser extent RNA. The sequence is that of Transcript termination protein A18 from Mus musculus (Mouse).